Consider the following 146-residue polypeptide: Pre-mRNA-splicing factor cwf14 (146 aa).

This sequence belongs to the BUD31 (G10) family. Belongs to the 40S cdc5-associated complex (or cwf complex), a spliceosome sub-complex reminiscent of a late-stage spliceosome composed of the U2, U5 and U6 snRNAs and at least brr2, cdc5, cwf2/prp3, cwf3/syf1, cwf4/syf3, cwf5/ecm2, spp42/cwf6, cwf7/spf27, cwf8, cwf9, cwf10, cwf11, cwf12, prp45/cwf13, cwf14, cwf15, cwf16, cwf17, cwf18, cwf19, cwf20, cwf21, cwf22, cwf23, cwf24, cwf25, cwf26, cyp7/cwf27, cwf28, cwf29/ist3, lea1, msl1, prp5/cwf1, prp10, prp12/sap130, prp17, prp22, sap61, sap62, sap114, sap145, slu7, smb1, smd1, smd3, smf1, smg1 and syf2.

The protein resides in the nucleus. Its function is as follows. Involved in mRNA splicing where it associates with cdc5 and the other cwf proteins as part of the spliceosome. The protein is Pre-mRNA-splicing factor cwf14 (cwf14) of Schizosaccharomyces pombe (strain 972 / ATCC 24843) (Fission yeast).